A 372-amino-acid polypeptide reads, in one-letter code: Glutamate 5-kinase (372 aa).

ATP is bound at residue lysine 14. Residues serine 54, aspartate 141, and asparagine 153 each contribute to the substrate site. 173–174 (TD) lines the ATP pocket. A PUA domain is found at 280–358 (RGHVVIDAGA…GEIESVLGYM (79 aa)).

This sequence belongs to the glutamate 5-kinase family.

It localises to the cytoplasm. It carries out the reaction L-glutamate + ATP = L-glutamyl 5-phosphate + ADP. Its pathway is amino-acid biosynthesis; L-proline biosynthesis; L-glutamate 5-semialdehyde from L-glutamate: step 1/2. Catalyzes the transfer of a phosphate group to glutamate to form L-glutamate 5-phosphate. The chain is Glutamate 5-kinase from Burkholderia lata (strain ATCC 17760 / DSM 23089 / LMG 22485 / NCIMB 9086 / R18194 / 383).